The chain runs to 408 residues: Peptidase T (408 aa).

His-78 lines the Zn(2+) pocket. Asp-80 is an active-site residue. Asp-140 is a binding site for Zn(2+). Catalysis depends on Glu-173, which acts as the Proton acceptor. Zn(2+) contacts are provided by Glu-174, Asp-196, and His-379.

This sequence belongs to the peptidase M20B family. Requires Zn(2+) as cofactor.

The protein resides in the cytoplasm. The catalysed reaction is Release of the N-terminal residue from a tripeptide.. Its function is as follows. Cleaves the N-terminal amino acid of tripeptides. The polypeptide is Peptidase T (Salmonella arizonae (strain ATCC BAA-731 / CDC346-86 / RSK2980)).